The following is a 573-amino-acid chain: Chaperone Ric-8 (573 aa).

The span at 308-324 (ESHKEREQDNEKEKDTE) shows a compositional bias: basic and acidic residues. Disordered regions lie at residues 308–329 (ESHK…GAGA) and 473–493 (GTDY…QQQQ). Residues Ser-477, Ser-478, Ser-480, and Ser-483 each carry the phosphoserine modification.

It belongs to the synembryn family. As to quaternary structure, interacts with GDP-bound G(i)-alpha protein G-i-alpha-65A. Does not interact with G-alpha proteins when they are in complex with subunits beta and gamma. Interacts with Frq2 in a Ca(2+)-independent manner but does not interact with Frq1. Expression in the embryo is primarily neural.

Its subcellular location is the cytoplasm. It localises to the cell cortex. It is found in the presynapse. Functionally, chaperone that specifically binds and folds some, but not all, nascent G alpha proteins prior to G protein heterotrimer formation, promoting their stability and activity. Also acts as a guanine nucleotide exchange factor (GEF) for G alpha proteins by stimulating exchange of bound GDP for free GTP. Plays a key role in asymmetric spindle positioning, a step for asymmetric cell division that generates cell diversity during development by activating G(i) alpha protein independently of G-protein coupled receptors. Required during gastrulation and sensory organ precursor (SOP) formation. Plays a role in positively regulating synapse number and neurotransmitter release. The protein is Chaperone Ric-8 (ric8a) of Drosophila melanogaster (Fruit fly).